We begin with the raw amino-acid sequence, 372 residues long: MSNQHTLLVSNLLPVGSNISTWWNFGSMLLTCLALQTMTGFFLAIHYTANINLAFSSVIHITRDVPYGWIMQNIHAISASLFFICIYIHIARGLYYGLYLNKEVWLSGTTLLITLMATAFFGYVLPWGQMSFWAATVITNLLTAIPYLGATLTTWLWGGFSINDPTLTRFFALHFILPFAIISLSSIHIILLHNEGSNNPLGTNSDIDKIPFHPYHSYKDMLMITSMITLLFIILSFSPNLLNDPENFSKANPLVTPQHIKPEWYFLFAYGILRSIPNKLGGTLALLTSVAILTTVPFTHTSYTRSMMFRPLSQALFWTLIATFITITWTASKPVEPPFVTISQTTSIIYFSFFITIPLLGWAENKMMMMNN.

Helical transmembrane passes span phenylalanine 25 to isoleucine 45, tryptophan 69 to isoleucine 90, tryptophan 105 to leucine 125, and phenylalanine 170 to isoleucine 190. Heme b-binding residues include histidine 75 and histidine 89. Heme b is bound by residues histidine 174 and histidine 188. Histidine 193 contacts a ubiquinone. 4 helical membrane-spanning segments follow: residues tyrosine 218–serine 238, leucine 280–histidine 300, leucine 312–serine 332, and phenylalanine 339–proline 358.

This sequence belongs to the cytochrome b family. The cytochrome bc1 complex contains 3 respiratory subunits (MT-CYB, CYC1 and UQCRFS1), 2 core proteins (UQCRC1 and UQCRC2) and probably 6 low-molecular weight proteins. Requires heme b as cofactor.

The protein resides in the mitochondrion inner membrane. Its function is as follows. Component of the ubiquinol-cytochrome c reductase complex (complex III or cytochrome b-c1 complex) that is part of the mitochondrial respiratory chain. The b-c1 complex mediates electron transfer from ubiquinol to cytochrome c. Contributes to the generation of a proton gradient across the mitochondrial membrane that is then used for ATP synthesis. In Naja multifasciata (Burrowing cobra), this protein is Cytochrome b (MT-CYB).